The sequence spans 121 residues: Large ribosomal subunit protein uL22 (121 aa).

This sequence belongs to the universal ribosomal protein uL22 family. As to quaternary structure, part of the 50S ribosomal subunit.

Functionally, this protein binds specifically to 23S rRNA; its binding is stimulated by other ribosomal proteins, e.g. L4, L17, and L20. It is important during the early stages of 50S assembly. It makes multiple contacts with different domains of the 23S rRNA in the assembled 50S subunit and ribosome. Its function is as follows. The globular domain of the protein is located near the polypeptide exit tunnel on the outside of the subunit, while an extended beta-hairpin is found that lines the wall of the exit tunnel in the center of the 70S ribosome. The sequence is that of Large ribosomal subunit protein uL22 from Micrococcus luteus (strain ATCC 4698 / DSM 20030 / JCM 1464 / CCM 169 / CCUG 5858 / IAM 1056 / NBRC 3333 / NCIMB 9278 / NCTC 2665 / VKM Ac-2230) (Micrococcus lysodeikticus).